We begin with the raw amino-acid sequence, 184 residues long: Large ribosomal subunit protein uL5 (184 aa).

Belongs to the universal ribosomal protein uL5 family. In terms of assembly, part of the 50S ribosomal subunit; part of the 5S rRNA/L5/L18/L25 subcomplex. Contacts the 5S rRNA and the P site tRNA. Forms a bridge to the 30S subunit in the 70S ribosome.

This is one of the proteins that bind and probably mediate the attachment of the 5S RNA into the large ribosomal subunit, where it forms part of the central protuberance. In the 70S ribosome it contacts protein S13 of the 30S subunit (bridge B1b), connecting the 2 subunits; this bridge is implicated in subunit movement. Contacts the P site tRNA; the 5S rRNA and some of its associated proteins might help stabilize positioning of ribosome-bound tRNAs. The polypeptide is Large ribosomal subunit protein uL5 (Fervidobacterium nodosum (strain ATCC 35602 / DSM 5306 / Rt17-B1)).